A 221-amino-acid polypeptide reads, in one-letter code: UPF0502 protein PSPA7_1674 (221 aa).

The protein belongs to the UPF0502 family.

This Pseudomonas paraeruginosa (strain DSM 24068 / PA7) (Pseudomonas aeruginosa (strain PA7)) protein is UPF0502 protein PSPA7_1674.